The sequence spans 253 residues: Glucosamine-6-phosphate deaminase (253 aa).

The active-site Proton acceptor; for enolization step is D67. N136 (for ring-opening step) is an active-site residue. The Proton acceptor; for ring-opening step role is filled by H138. E143 functions as the For ring-opening step in the catalytic mechanism.

The protein belongs to the glucosamine/galactosamine-6-phosphate isomerase family. NagB subfamily.

The enzyme catalyses alpha-D-glucosamine 6-phosphate + H2O = beta-D-fructose 6-phosphate + NH4(+). The protein operates within amino-sugar metabolism; N-acetylneuraminate degradation; D-fructose 6-phosphate from N-acetylneuraminate: step 5/5. Its function is as follows. Catalyzes the reversible isomerization-deamination of glucosamine 6-phosphate (GlcN6P) to form fructose 6-phosphate (Fru6P) and ammonium ion. The protein is Glucosamine-6-phosphate deaminase of Thermoanaerobacter pseudethanolicus (strain ATCC 33223 / 39E) (Clostridium thermohydrosulfuricum).